The chain runs to 144 residues: Benzoylsuccinyl-CoA thiolase subunit BbsA (144 aa).

The Zn(2+) site is built by C40, C43, C54, and C57.

Belongs to the BbsA family. As to quaternary structure, heterotetramer composed of two BbsA subunits and two BbsB subunits. BbsA forms homodimeric subcomplexes. Both BbsA and BbsB are essential for enzymatic activity.

It catalyses the reaction (S)-2-benzoylsuccinyl-CoA + CoA = benzoyl-CoA + succinyl-CoA. The protein operates within xenobiotic degradation; toluene degradation. Component of the BbsAB thiolase complex, which catalyzes the thiolytic cleavage of (S)-2-benzoylsuccinyl-CoA to succinyl-CoA and benzoyl-CoA, the final step of anaerobic toluene metabolism. The BbsA subunit critically contributes to an induced-fit process for productive binding of a CoA substrate into the active site of BbsB. The polypeptide is Benzoylsuccinyl-CoA thiolase subunit BbsA (Thauera aromatica).